Reading from the N-terminus, the 170-residue chain is Protein HemX (170 aa).

Polar residues predominate over residues 1–17 (MTEQKNTNENDLQNGTS). The tract at residues 1-24 (MTEQKNTNENDLQNGTSKADDDIR) is disordered. The chain crosses the membrane as a helical span at residues 37–57 (GLIGSAVAILVILAIGGGLYY).

It localises to the cell membrane. This Proteus mirabilis protein is Protein HemX.